A 1620-amino-acid polypeptide reads, in one-letter code: ABC-type organic anion transporter ABCA8B (1620 aa).

7 helical membrane passes run 30-50, 223-243, 267-287, 298-318, 326-346, 352-372, and 396-416; these read SLME…YPHG, FFIF…SINV, SWGL…ALVI, FMVV…LAFL, SVLT…LGFT, LPAP…TLGM, and LIIA…ALMM. The region spanning 479-714 is the ABC transporter 1 domain; it reads IRIRNISKEY…WGVGYHLSLQ (236 aa). Residue 515-522 participates in ATP binding; it reads GHSGAGKS. A glycan (N-linked (GlcNAc...) asparagine) is linked at Asn-723. 8 helical membrane-spanning segments follow: residues 860–880, 979–999, 1023–1043, 1069–1089, 1105–1125, 1135–1155, 1164–1184, and 1194–1214; these read TLLS…FENI, CFPV…KPSA, TAFW…SSVT, MVDI…DYLF, IPCS…ISFI, IWSL…LLAF, IIFL…LHLF, and VIEP…FIFT. The ABC transporter 2 domain occupies 1283–1516; sequence LRKEYAGKQK…FGKDYLLEMK (234 aa). Position 1321–1328 (1321–1328) interacts with ATP; it reads GHNGAGKS.

The protein belongs to the ABC transporter superfamily. ABCA family. Expressed in heart, brain, lung, liver and skeletal muscle. Highly expressed in the liver, and is also abundant in heart and skeletal muscle. Highly expressed in liver.

The protein localises to the cell membrane. It localises to the basolateral cell membrane. The catalysed reaction is taurocholate(in) + ATP + H2O = taurocholate(out) + ADP + phosphate + H(+). It carries out the reaction cholesterol(in) + ATP + H2O = cholesterol(out) + ADP + phosphate + H(+). Its activity is regulated as follows. Cholesterol efflux is increased by extracellularly applied taurocholate. Its function is as follows. Mediates cholesterol and taurocholate efflux. Through the interaction with ABCA1 potentiates the cholesterol efflux to lipid-free APOA1, in turn regulates high-density lipoprotein cholesterol levels. The polypeptide is ABC-type organic anion transporter ABCA8B (Mus musculus (Mouse)).